The primary structure comprises 735 residues: MKTPKTVPEVKLSWEISADEITAILAGSHSNPFAVLGVHQAGDAFVARCFIPGAEEVTAMTLDGGVIGELKQLHADGVFAGPVSLTKLQPVRYRARRGDAEWAVTDPYSFGPVLGPMDDYFAREGSHLRLFDKMGAHLIKHDGAQGIHFAVWAPNAQRVSVVGDFNNWDGRRHVMRFRSDSGIWEIFAPDVPIGVAYKFEIRGQDGVLLPLKADPFARRSELRPKTASVTAAELEQEWEDEAHLKHWRETDKRRQPISIYEVHAASWQRRQDGTMLSWDELASSLIPYCADMGFTHIEFLPITEYPYDPSWGYQTTGLYAPTARFGEPEGFARFVNGCHKVGIGVILDWVPAHFPTDEHGLGWFDGTALYEHEDPRKGFHPDWSTAIYNFGRTEVVSYLVNNALYWAEKFHLDGLRVDAVASMLYLDYSRKHGEWIPNEYGGNENLEAVRFLQDLNIRIYGKNSNVMTIAEESTSWPKVSQPVHEGGLGFGFKWNMGFMHDTLSYMSRDPIYRGHHHNELTFGLLYAYSENFVLPLSHDEVVHGKGSLIAKMPGDDWQKFANLRAYYAYMWGYPGKKLLFMGQEFAQWSEWSEEKALDWNLLQYRMHEGMRRLVRDLNFTYRSKPALHARDCEGEGFEWLVADDHQNSVFAWLRKAPGQKPVAVITNFTPIYRENYSIRLPSAGRWREILNTDADIYGGSGKGNGGRVQAVDAGGNITCSITLPPLATIMLEPEN.

Asp-418 acts as the Nucleophile in catalysis. The Proton donor role is filled by Glu-471.

It belongs to the glycosyl hydrolase 13 family. GlgB subfamily. In terms of assembly, monomer.

The enzyme catalyses Transfers a segment of a (1-&gt;4)-alpha-D-glucan chain to a primary hydroxy group in a similar glucan chain.. It participates in glycan biosynthesis; glycogen biosynthesis. Catalyzes the formation of the alpha-1,6-glucosidic linkages in glycogen by scission of a 1,4-alpha-linked oligosaccharide from growing alpha-1,4-glucan chains and the subsequent attachment of the oligosaccharide to the alpha-1,6 position. The chain is 1,4-alpha-glucan branching enzyme GlgB 1 from Rhizobium johnstonii (strain DSM 114642 / LMG 32736 / 3841) (Rhizobium leguminosarum bv. viciae).